We begin with the raw amino-acid sequence, 430 residues long: Histidinol dehydrogenase (430 aa).

Residues S237, Q259, and H262 each contribute to the substrate site. The Zn(2+) site is built by Q259 and H262. Catalysis depends on proton acceptor residues E327 and H328. Substrate is bound by residues H328, D361, E415, and H420. D361 contributes to the Zn(2+) binding site. H420 is a binding site for Zn(2+).

The protein belongs to the histidinol dehydrogenase family. Zn(2+) serves as cofactor.

The catalysed reaction is L-histidinol + 2 NAD(+) + H2O = L-histidine + 2 NADH + 3 H(+). It functions in the pathway amino-acid biosynthesis; L-histidine biosynthesis; L-histidine from 5-phospho-alpha-D-ribose 1-diphosphate: step 9/9. In terms of biological role, catalyzes the sequential NAD-dependent oxidations of L-histidinol to L-histidinaldehyde and then to L-histidine. The polypeptide is Histidinol dehydrogenase (Mesorhizobium japonicum (strain LMG 29417 / CECT 9101 / MAFF 303099) (Mesorhizobium loti (strain MAFF 303099))).